We begin with the raw amino-acid sequence, 404 residues long: MALVNPHGKEKVLKPLLLTGDELVSEKERAKSMKQVRLSSRETGDLIMLGIGGFTPLTGFMGHADWKGSVETCTMADGTFWPIPITLSTSKEQADTIAIGEEVALVDDESGELMGSMKVEEKYCIDKAHECREVFKTDDPAHPGVLMVMNQGDVNLAGPVKVFSEGSFPTEFAGIYMTPAQTRKMFEENGWSTVAAFQTRNPMHRSHEYLVKIAVEICDGVLIHQLLGKLKPGDIPADVRRDCINVLTEKYFVKGTTIQAGYPLDMRYAGPREALLHALFRQNFGCSHLIVGRDHAGVGDYYGPFDAHHIFDQIPEGALETKPLKIDWTFYCYKCDAMASMKTCPHEPADRLNLSGTKLRKMLSEGEEVPEHFSRPEVLEILRRYYAGLTEKVDIKMHSHAIGK.

Belongs to the sulfate adenylyltransferase family.

It catalyses the reaction sulfate + ATP + H(+) = adenosine 5'-phosphosulfate + diphosphate. Its pathway is sulfur metabolism; hydrogen sulfide biosynthesis; sulfite from sulfate: step 1/3. In Chlorobaculum tepidum (strain ATCC 49652 / DSM 12025 / NBRC 103806 / TLS) (Chlorobium tepidum), this protein is Sulfate adenylyltransferase.